Consider the following 111-residue polypeptide: Nucleoid-associated protein Cpar_0834 (111 aa).

It belongs to the YbaB/EbfC family. Homodimer.

The protein resides in the cytoplasm. It localises to the nucleoid. Functionally, binds to DNA and alters its conformation. May be involved in regulation of gene expression, nucleoid organization and DNA protection. This is Nucleoid-associated protein Cpar_0834 from Chlorobaculum parvum (strain DSM 263 / NCIMB 8327) (Chlorobium vibrioforme subsp. thiosulfatophilum).